Consider the following 122-residue polypeptide: Large ribosomal subunit protein uL14 (122 aa).

Belongs to the universal ribosomal protein uL14 family. Part of the 50S ribosomal subunit. Forms a cluster with proteins L3 and L19. In the 70S ribosome, L14 and L19 interact and together make contacts with the 16S rRNA in bridges B5 and B8.

Binds to 23S rRNA. Forms part of two intersubunit bridges in the 70S ribosome. The polypeptide is Large ribosomal subunit protein uL14 (Polynucleobacter necessarius subsp. necessarius (strain STIR1)).